We begin with the raw amino-acid sequence, 490 residues long: GTPase Der (490 aa).

2 EngA-type G domains span residues 3-166 and 203-376; these read PVVA…MEDL and IKLA…DSST. Residues 9-16, 56-60, 118-121, 209-216, 256-260, and 321-324 each bind GTP; these read GRPNVGKS, DTGGI, NKTD, DTAGV, and NKWD. The region spanning 377-461 is the KH-like domain; sequence RRVGTSMLTR…PIRIQFKEGE (85 aa).

It belongs to the TRAFAC class TrmE-Era-EngA-EngB-Septin-like GTPase superfamily. EngA (Der) GTPase family. Associates with the 50S ribosomal subunit.

Its function is as follows. GTPase that plays an essential role in the late steps of ribosome biogenesis. The sequence is that of GTPase Der from Escherichia coli O81 (strain ED1a).